Consider the following 1052-residue polypeptide: Kruppel-like factor 18 (1052 aa).

3 consecutive C2H2-type zinc fingers follow at residues 964-988 (YVCTYEDCKMSYSKACHLRTHMRKH), 994-1018 (YVCDVEGCTWKFARSDELNRHKKRH), and 1024-1046 (YLCSICSKNFARSDHLKQHAKVH).

It belongs to the krueppel C2H2-type zinc-finger protein family.

The protein resides in the nucleus. The chain is Kruppel-like factor 18 from Homo sapiens (Human).